The chain runs to 439 residues: Xylose isomerase (439 aa).

Active-site residues include histidine 101 and aspartate 104. Residues glutamate 232, glutamate 268, histidine 271, aspartate 296, aspartate 307, aspartate 309, and aspartate 339 each coordinate Mg(2+).

The protein belongs to the xylose isomerase family. As to quaternary structure, homotetramer. The cofactor is Mg(2+).

It is found in the cytoplasm. The enzyme catalyses alpha-D-xylose = alpha-D-xylulofuranose. This is Xylose isomerase (xylA) from Lactococcus lactis subsp. lactis (strain IL1403) (Streptococcus lactis).